Consider the following 1435-residue polypeptide: MGARASVLSGGELDRWEKIRLRPGGKKKYKLKHIVWASRELERFAVNPGLLETSEGCRQILGQLQPSLQTGSEELRSLYNTVATLYCVHQRIEIKDTKEALDKIEEEQNKSKKKAQQAAADTGHSNQVSQNYPIVQNIQGQMVHQAISPRTLNAWVKVVEEKAFSPEVIPMFSALSEGATPQDLNTMLNTVGGHQAAMQMLKETINEEAAEWDRVHPVHAGPIAPGQMREPRGSDIAGTTSTLQEQIGWMTNNPPIPVGEIYKRWIILGLNKIVRMYSPTSILDIRQGPKEPFRDYVDRFYKTLRAEQASQEVKNWMTETLLVQNANPDCKTILKALGPAATLEEMMTACQGVGGPGHKARVLAEAMSQVTNSATIMMQRGNFRNQRKIVKCFNCGKEGHTARNCRAPRKKGCWKCGKEGHQMKDCTERQANFLREDLAFLQGKAREFSSEQTRANSPTRRELQVWGRDNNSPSEAGADRQGTVSFNFPQVTLWQRPLVTIKIGGQLKEALLDTGADDTVLEEMSLPGRWKPKMIGGIGGFIKVRQYDQILIEICGHKAIGTVLVGPTPVNIIGRNLLTQIGCTLNFPISPIETVPVKLKPGMDGPKVKQWPLTEEKIKALVEICTEMEKEGKISKIGPENPYNTPVFAIKKKDSTKWRKLVDFRELNKRTQDFWEVQLGIPHPAGLKKKKSVTVLDVGDAYFSVPLDEDFRKYTAFTIPSINNETPGIRYQYNVLPQGWKGSPAIFQSSMTKILEPFRKQNPDIVIYQYMDDLYVGSDLEIGQHRTKIEELRQHLLRWGLTTPDKKHQKEPPFLWMGYELHPDKWTVQPIVLPEKDSWTVNDIQKLVGKLNWASQIYPGIKVRQLCKLLRGTKALTEVIPLTEEAELELAENREILKEPVHGVYYDPSKDLIAEIQKQGQGQWTYQIYQEPFKNLKTGKYARMRGAHTNDVKQLTEAVQKITTESIVIWGKTPKFKLPIQKETWETWWTEYWQATWIPEWEFVNTPPLVKLWYQLEKEPIVGAETFYVDGAANRETKLGKAGYVTNRGRQKVVTLTDTTNQKTELQAIYLALQDSGLEVNIVTDSQYALGIIQAQPDQSESELVNQIIEQLIKKEKVYLAWVPAHKGIGGNEQVDKLVSAGIRKVLFLDGIDKAQDEHEKYHSNWRAMASDFNLPPVVAKEIVASCDKCQLKGEAMHGQVDCSPGIWQLDCTHLEGKVILVAVHVASGYIEAEVIPAETGQETAYFLLKLAGRWPVKTIHTDNGSNFTGATVRAACWWAGIKQEFGIPYNPQSQGVVESMNKELKKIIGQVRDQAEHLKTAVQMAVFIHNFKRKGGIGGYSAGERIVDIIATDIQTKELQKQITKIQNFRVYYRDSRNPLWKGPAKLLWKGEGAVVIQDNSDIKVVPRRKAKIIRDYGKQMAGDDCVASRQDED.

The N-myristoyl glycine; by host moiety is linked to residue Gly2. The interaction with Gp41 stretch occupies residues 7-31 (VLSGGELDRWEKIRLRPGGKKKYKL). The interval 8-43 (LSGGELDRWEKIRLRPGGKKKYKLKHIVWASRELER) is interaction with host CALM1. The segment at 12 to 19 (ELDRWEKI) is interaction with host AP3D1. The interaction with membrane phosphatidylinositol 4,5-bisphosphate and RNA stretch occupies residues 14-33 (DRWEKIRLRPGGKKKYKLKH). The Nuclear export signal motif lies at 16 to 22 (WEKIRLR). The short motif at 26-32 (KKKYKLK) is the Nuclear localization signal element. Residues 73–77 (EELRS) are interaction with membrane phosphatidylinositol 4,5-bisphosphate. The segment at 106–128 (EEQNKSKKKAQQAAADTGHSNQV) is disordered. A Phosphotyrosine; by host modification is found at Tyr132. The segment at 189-227 (NTVGGHQAAMQMLKETINEEAAEWDRVHPVHAGPIAPGQ) is interaction with host PPIA/CYPA and NUP153. A PPIA/CYPA-binding loop region spans residues 217–225 (PVHAGPIAP). A dimerization/Multimerization of capsid protein p24 region spans residues 277 to 363 (YSPTSILDIR…GGPGHKARVL (87 aa)). 2 consecutive CCHC-type zinc fingers follow at residues 390 to 407 (VKCFNCGKEGHTARNCRA) and 411 to 428 (KGCWKCGKEGHQMKDCTE). The tract at residues 448-481 (FSSEQTRANSPTRRELQVWGRDNNSPSEAGADRQ) is disordered. The tract at residues 489-493 (PQVTL) is dimerization of protease. The Peptidase A2 domain maps to 508–577 (KEALLDTGAD…TPVNIIGRNL (70 aa)). The For protease activity; shared with dimeric partner role is filled by Asp513. 2 dimerization of protease regions span residues 537 to 543 (GIGGFIK) and 576 to 588 (NLLTQIGCTLNFP). Positions 631-821 (EGKISKIGPE…PPFLWMGYEL (191 aa)) constitute a Reverse transcriptase domain. The Mg(2+) site is built by Asp697, Asp772, and Asp773. Positions 814–822 (FLWMGYELH) are RT 'primer grip'. A Tryptophan repeat motif motif is present at residues 985-1001 (WETWWTEYWQATWIPEW). Residues 1021–1144 (IVGAETFYVD…VDKLVSAGIR (124 aa)) enclose the RNase H type-1 domain. Residues Asp1030, Glu1065, Asp1085, and Asp1136 each coordinate Mg(2+). An Integrase-type zinc finger spans residues 1150 to 1191 (DGIDKAQDEHEKYHSNWRAMASDFNLPPVVAKEIVASCDKCQ). Residues His1159, His1163, Cys1187, and Cys1190 each contribute to the Zn(2+) site. The Integrase catalytic domain maps to 1201–1351 (VDCSPGIWQL…SAGERIVDII (151 aa)). 3 residues coordinate Mg(2+): Asp1211, Asp1263, and Glu1299. A DNA-binding region (integrase-type) is located at residues 1370-1417 (FRVYYRDSRNPLWKGPAKLLWKGEGAVVIQDNSDIKVVPRRKAKIIRD).

Homotrimer; further assembles as hexamers of trimers. Interacts with gp41 (via C-terminus). Interacts with host CALM1; this interaction induces a conformational change in the Matrix protein, triggering exposure of the myristate group. Interacts with host AP3D1; this interaction allows the polyprotein trafficking to multivesicular bodies during virus assembly. Part of the pre-integration complex (PIC) which is composed of viral genome, matrix protein, Vpr and integrase. In terms of assembly, homodimer; the homodimer further multimerizes as homohexamers or homopentamers. Interacts with human PPIA/CYPA; this interaction stabilizes the capsid. Interacts with human NUP153. Interacts with host PDZD8; this interaction stabilizes the capsid. Interacts with monkey TRIM5; this interaction destabilizes the capsid. As to quaternary structure, homodimer, whose active site consists of two apposed aspartic acid residues. Heterodimer of p66 RT and p51 RT (RT p66/p51). Heterodimerization of RT is essential for DNA polymerase activity. The overall folding of the subdomains is similar in p66 RT and p51 RT but the spatial arrangements of the subdomains are dramatically different. In terms of assembly, homotetramer; may further associate as a homohexadecamer. Part of the pre-integration complex (PIC) which is composed of viral genome, matrix protein, Vpr and integrase. Interacts with human SMARCB1/INI1 and human PSIP1/LEDGF isoform 1. Interacts with human KPNA3; this interaction might play a role in nuclear import of the pre-. integration complex. Interacts with human NUP153; this interaction might play a role in nuclear import of the pre-integration complex. The cofactor is Mg(2+). In terms of processing, specific enzymatic cleavages by the viral protease yield mature proteins. The protease is released by autocatalytic cleavage. The polyprotein is cleaved during and after budding, this process is termed maturation. Proteolytic cleavage of p66 RT removes the RNase H domain to yield the p51 RT subunit. Nucleocapsid protein p7 might be further cleaved after virus entry. Tyrosine phosphorylated presumably in the virion by a host kinase. Phosphorylation is apparently not a major regulator of membrane association. Post-translationally, phosphorylated possibly by host MAPK1; this phosphorylation is necessary for Pin1-mediated virion uncoating. In terms of processing, methylated by host PRMT6, impairing its function by reducing RNA annealing and the initiation of reverse transcription.

The protein resides in the host cell membrane. The protein localises to the host endosome. Its subcellular location is the host multivesicular body. It is found in the virion membrane. It localises to the host nucleus. The protein resides in the host cytoplasm. The protein localises to the virion. The catalysed reaction is Specific for a P1 residue that is hydrophobic, and P1' variable, but often Pro.. It catalyses the reaction Endohydrolysis of RNA in RNA/DNA hybrids. Three different cleavage modes: 1. sequence-specific internal cleavage of RNA. Human immunodeficiency virus type 1 and Moloney murine leukemia virus enzymes prefer to cleave the RNA strand one nucleotide away from the RNA-DNA junction. 2. RNA 5'-end directed cleavage 13-19 nucleotides from the RNA end. 3. DNA 3'-end directed cleavage 15-20 nucleotides away from the primer terminus.. The enzyme catalyses 3'-end directed exonucleolytic cleavage of viral RNA-DNA hybrid.. It carries out the reaction DNA(n) + a 2'-deoxyribonucleoside 5'-triphosphate = DNA(n+1) + diphosphate. Its activity is regulated as follows. Protease: The viral protease is inhibited by many synthetic protease inhibitors (PIs), such as amprenavir, atazanavir, indinavir, loprinavir, nelfinavir, ritonavir and saquinavir. Use of protease inhibitors in tritherapy regimens permit more ambitious therapeutic strategies. Reverse transcriptase/ribonuclease H: RT can be inhibited either by nucleoside RT inhibitors (NRTIs) or by non nucleoside RT inhibitors (NNRTIs). NRTIs act as chain terminators, whereas NNRTIs inhibit DNA polymerization by binding a small hydrophobic pocket near the RT active site and inducing an allosteric change in this region. Classical NRTIs are abacavir, adefovir (PMEA), didanosine (ddI), lamivudine (3TC), stavudine (d4T), tenofovir (PMPA), zalcitabine (ddC), and zidovudine (AZT). Classical NNRTIs are atevirdine (BHAP U-87201E), delavirdine, efavirenz (DMP-266), emivirine (I-EBU), and nevirapine (BI-RG-587). The tritherapies used as a basic effective treatment of AIDS associate two NRTIs and one NNRTI. Functionally, mediates, with Gag polyprotein, the essential events in virion assembly, including binding the plasma membrane, making the protein-protein interactions necessary to create spherical particles, recruiting the viral Env proteins, and packaging the genomic RNA via direct interactions with the RNA packaging sequence (Psi). Gag-Pol polyprotein may regulate its own translation, by the binding genomic RNA in the 5'-UTR. At low concentration, the polyprotein would promote translation, whereas at high concentration, the polyprotein would encapsidate genomic RNA and then shut off translation. Its function is as follows. Targets the polyprotein to the plasma membrane via a multipartite membrane-binding signal, that includes its myristoylated N-terminus. Matrix protein is part of the pre-integration complex. Implicated in the release from host cell mediated by Vpu. Binds to RNA. In terms of biological role, forms the conical core that encapsulates the genomic RNA-nucleocapsid complex in the virion. Most core are conical, with only 7% tubular. The core is constituted by capsid protein hexamer subunits. The core is disassembled soon after virion entry. Host restriction factors such as monkey TRIM5-alpha or TRIMCyp bind retroviral capsids and cause premature capsid disassembly, leading to blocks in reverse transcription. Capsid restriction by TRIM5 is one of the factors which restricts HIV-1 to the human species. Host PIN1 apparently facilitates the virion uncoating. On the other hand, interactions with PDZD8 or CYPA stabilize the capsid. Encapsulates and protects viral dimeric unspliced genomic RNA (gRNA). Binds these RNAs through its zinc fingers. Acts as a nucleic acid chaperone which is involved in rearangement of nucleic acid secondary structure during gRNA retrotranscription. Also facilitates template switch leading to recombination. As part of the polyprotein, participates in gRNA dimerization, packaging, tRNA incorporation and virion assembly. Functionally, aspartyl protease that mediates proteolytic cleavages of Gag and Gag-Pol polyproteins during or shortly after the release of the virion from the plasma membrane. Cleavages take place as an ordered, step-wise cascade to yield mature proteins. This process is called maturation. Displays maximal activity during the budding process just prior to particle release from the cell. Also cleaves Nef and Vif, probably concomitantly with viral structural proteins on maturation of virus particles. Hydrolyzes host EIF4GI and PABP1 in order to shut off the capped cellular mRNA translation. The resulting inhibition of cellular protein synthesis serves to ensure maximal viral gene expression and to evade host immune response. Also mediates cleavage of host YTHDF3. Mediates cleavage of host CARD8, thereby activating the CARD8 inflammasome, leading to the clearance of latent HIV-1 in patient CD4(+) T-cells after viral reactivation; in contrast, HIV-1 can evade CARD8-sensing when its protease remains inactive in infected cells prior to viral budding. Its function is as follows. Multifunctional enzyme that converts the viral RNA genome into dsDNA in the cytoplasm, shortly after virus entry into the cell. This enzyme displays a DNA polymerase activity that can copy either DNA or RNA templates, and a ribonuclease H (RNase H) activity that cleaves the RNA strand of RNA-DNA heteroduplexes in a partially processive 3' to 5' endonucleasic mode. Conversion of viral genomic RNA into dsDNA requires many steps. A tRNA(3)-Lys binds to the primer-binding site (PBS) situated at the 5'-end of the viral RNA. RT uses the 3' end of the tRNA primer to perform a short round of RNA-dependent minus-strand DNA synthesis. The reading proceeds through the U5 region and ends after the repeated (R) region which is present at both ends of viral RNA. The portion of the RNA-DNA heteroduplex is digested by the RNase H, resulting in a ssDNA product attached to the tRNA primer. This ssDNA/tRNA hybridizes with the identical R region situated at the 3' end of viral RNA. This template exchange, known as minus-strand DNA strong stop transfer, can be either intra- or intermolecular. RT uses the 3' end of this newly synthesized short ssDNA to perform the RNA-dependent minus-strand DNA synthesis of the whole template. RNase H digests the RNA template except for two polypurine tracts (PPTs) situated at the 5'-end and near the center of the genome. It is not clear if both polymerase and RNase H activities are simultaneous. RNase H probably can proceed both in a polymerase-dependent (RNA cut into small fragments by the same RT performing DNA synthesis) and a polymerase-independent mode (cleavage of remaining RNA fragments by free RTs). Secondly, RT performs DNA-directed plus-strand DNA synthesis using the PPTs that have not been removed by RNase H as primers. PPTs and tRNA primers are then removed by RNase H. The 3' and 5' ssDNA PBS regions hybridize to form a circular dsDNA intermediate. Strand displacement synthesis by RT to the PBS and PPT ends produces a blunt ended, linear dsDNA copy of the viral genome that includes long terminal repeats (LTRs) at both ends. In terms of biological role, catalyzes viral DNA integration into the host chromosome, by performing a series of DNA cutting and joining reactions. This enzyme activity takes place after virion entry into a cell and reverse transcription of the RNA genome in dsDNA. The first step in the integration process is 3' processing. This step requires a complex comprising the viral genome, matrix protein, Vpr and integrase. This complex is called the pre-integration complex (PIC). The integrase protein removes 2 nucleotides from each 3' end of the viral DNA, leaving recessed CA OH's at the 3' ends. In the second step, the PIC enters cell nucleus. This process is mediated through integrase and Vpr proteins, and allows the virus to infect a non dividing cell. This ability to enter the nucleus is specific of lentiviruses, other retroviruses cannot and rely on cell division to access cell chromosomes. In the third step, termed strand transfer, the integrase protein joins the previously processed 3' ends to the 5' ends of strands of target cellular DNA at the site of integration. The 5'-ends are produced by integrase-catalyzed staggered cuts, 5 bp apart. A Y-shaped, gapped, recombination intermediate results, with the 5'-ends of the viral DNA strands and the 3' ends of target DNA strands remaining unjoined, flanking a gap of 5 bp. The last step is viral DNA integration into host chromosome. This involves host DNA repair synthesis in which the 5 bp gaps between the unjoined strands are filled in and then ligated. Since this process occurs at both cuts flanking the HIV genome, a 5 bp duplication of host DNA is produced at the ends of HIV-1 integration. Alternatively, Integrase may catalyze the excision of viral DNA just after strand transfer, this is termed disintegration. This Human immunodeficiency virus type 1 group M subtype B (isolate HXB2) (HIV-1) protein is Gag-Pol polyprotein (gag-pol).